Reading from the N-terminus, the 358-residue chain is Peptide chain release factor 1 (358 aa).

Glutamine 233 is subject to N5-methylglutamine.

Belongs to the prokaryotic/mitochondrial release factor family. Methylated by PrmC. Methylation increases the termination efficiency of RF1.

It localises to the cytoplasm. Its function is as follows. Peptide chain release factor 1 directs the termination of translation in response to the peptide chain termination codons UAG and UAA. This is Peptide chain release factor 1 from Beijerinckia indica subsp. indica (strain ATCC 9039 / DSM 1715 / NCIMB 8712).